A 591-amino-acid chain; its full sequence is Protein NRT1/ PTR FAMILY 1.1 (591 aa).

The next 11 helical transmembrane spans lie at 68 to 88, 98 to 118, 139 to 159, 186 to 206, 216 to 236, 329 to 349, 374 to 394, 418 to 438, 460 to 480, 496 to 516, and 543 to 563; these read TVLF…AFLS, IVIA…TAML, SSQL…SGGI, FFGW…TVIV, IGFG…VFAS, LKAL…SINV, IPAG…VVLY, MGLG…VEHY, AMWL…TGIG, IAAS…SVIL, and YYWV…VCSW.

Belongs to the major facilitator superfamily. Proton-dependent oligopeptide transporter (POT/PTR) (TC 2.A.17) family. Expressed in siliques, shoots and roots. Mainly detected in larger expanded leaves, in the companion cells of major veins.

Its subcellular location is the cell membrane. Functionally, low-affinity nitrate transporter involved in xylem-to-phloem transfer for redistributing nitrate into developing leaves. Not involved in dipeptides transport. The chain is Protein NRT1/ PTR FAMILY 1.1 (NPF1.1) from Arabidopsis thaliana (Mouse-ear cress).